The chain runs to 320 residues: Cytochrome c biogenesis protein CcsA (320 aa).

8 helical membrane-spanning segments follow: residues 15-35 (FSIVSIVITIHLITLLVDEII), 43-63 (KGMIAIFLCITGLLVTRWIYS), 71-91 (LYESLIFLSWSLSVIHIVPYF), 98-118 (LSTITASSVIFTQGFATSGLL), 143-163 (MILSYAALLCGSLLSVALLVI), 224-244 (VISLGFIFLTIGILSGAVWAN), 251-271 (WNWDPKETWAFITWIVFAIYL), and 285-305 (AIVASIGFLIIWICYFGVNLL).

The protein belongs to the CcmF/CycK/Ccl1/NrfE/CcsA family. As to quaternary structure, may interact with Ccs1.

It is found in the plastid. Its subcellular location is the chloroplast thylakoid membrane. In terms of biological role, required during biogenesis of c-type cytochromes (cytochrome c6 and cytochrome f) at the step of heme attachment. The chain is Cytochrome c biogenesis protein CcsA from Panax ginseng (Korean ginseng).